The sequence spans 206 residues: Small ribosomal subunit protein uS4 (206 aa).

Residues 96–156 enclose the S4 RNA-binding domain; sequence GRLDNVVYRM…EKAKKQSRVK (61 aa).

The protein belongs to the universal ribosomal protein uS4 family. As to quaternary structure, part of the 30S ribosomal subunit. Contacts protein S5. The interaction surface between S4 and S5 is involved in control of translational fidelity.

In terms of biological role, one of the primary rRNA binding proteins, it binds directly to 16S rRNA where it nucleates assembly of the body of the 30S subunit. Its function is as follows. With S5 and S12 plays an important role in translational accuracy. The chain is Small ribosomal subunit protein uS4 from Enterobacter sp. (strain 638).